The chain runs to 227 residues: GTP:AMP phosphotransferase AK3, mitochondrial (227 aa).

GTP-binding residues include G17, G19, K20, G21, and T22. K20 is modified (N6-succinyllysine). K34 is subject to N6-acetyllysine. S37 carries the post-translational modification Phosphoserine. The segment at 37–66 (SSGDLLRDNMLRGTEIGVLAKAFIDQGKLI) is NMP. Residues S38 and R43 each coordinate AMP. N6-succinyllysine is present on K57. K64 lines the AMP pocket. K64 and K80 each carry N6-acetyllysine; alternate. N6-succinyllysine; alternate occurs at positions 64 and 80. The AMP site is built by G91, R94, and Q98. Positions 127–164 (ARWIHPASGRVYNIEFNPPKTVGIDDLTGEPLIQREDD) are LID. Positions 128, 138, 139, 161, and 172 each coordinate GTP. 2 positions are modified to N6-acetyllysine; alternate: K174 and K189. 2 positions are modified to N6-succinyllysine; alternate: K174 and K189. Residue T201 participates in GTP binding. K203 bears the N6-acetyllysine mark.

Belongs to the adenylate kinase family. AK3 subfamily. Monomer.

The protein localises to the mitochondrion matrix. The catalysed reaction is a ribonucleoside 5'-triphosphate + AMP = a ribonucleoside 5'-diphosphate + ADP. It carries out the reaction GTP + AMP = GDP + ADP. The enzyme catalyses ITP + AMP = IDP + ADP. Functionally, mitochondrial adenylate kinase with a specific GTP:AMP phosphotransferase activity. Could also use ITP as phosphate donor. Its physiological function is to recycle GTP into GDP which is necessary for the TCA cycle in the mitochondrial matrix. The chain is GTP:AMP phosphotransferase AK3, mitochondrial from Pongo abelii (Sumatran orangutan).